Consider the following 526-residue polypeptide: Germ cell-less protein-like 2 (526 aa).

Residues 1–85 (MGSSSSRVLG…DKQQPLLNTP (85 aa)) form a disordered region. A Nuclear localization signal motif is present at residues 49–55 (SHKRKRS). Positions 62 to 77 (CDPDSHREEHEEEGDK) are enriched in basic and acidic residues. A Nuclear localization signal motif is present at residues 85 to 91 (PARKKLR). The BTB domain occupies 108–178 (SDIKICALGE…LYRDDVLIKP (71 aa)).

In terms of assembly, interacts with CUL3. As to expression, expressed predominantly in testis.

It is found in the nucleus matrix. It participates in protein modification; protein ubiquitination. In terms of biological role, possible function in spermatogenesis. Probable substrate-specific adapter of an E3 ubiquitin-protein ligase complex which mediates the ubiquitination and subsequent proteasomal degradation of target proteins. The sequence is that of Germ cell-less protein-like 2 from Homo sapiens (Human).